A 510-amino-acid polypeptide reads, in one-letter code: NAD(P)H-quinone oxidoreductase subunit 2 B, chloroplastic (510 aa).

13 consecutive transmembrane segments (helical) span residues 24-44, 59-79, 99-119, 124-144, 150-170, 184-204, 229-249, 295-315, 323-343, 354-374, 395-415, 418-438, and 484-504; these read LLLF…GLIL, WFYF…LFRW, IFQF…VEYI, MAIT…MFLC, ITIF…SGYT, LLMG…LYGL, ISIA…LAPF, WHLL…LIAI, MLAY…IVGD, YMLF…LFGL, ALSL…AGFF, LHLF…IGLL, and MIVC…ILAI.

The protein belongs to the complex I subunit 2 family. NDH is composed of at least 16 different subunits, 5 of which are encoded in the nucleus.

Its subcellular location is the plastid. The protein localises to the chloroplast thylakoid membrane. The catalysed reaction is a plastoquinone + NADH + (n+1) H(+)(in) = a plastoquinol + NAD(+) + n H(+)(out). The enzyme catalyses a plastoquinone + NADPH + (n+1) H(+)(in) = a plastoquinol + NADP(+) + n H(+)(out). NDH shuttles electrons from NAD(P)H:plastoquinone, via FMN and iron-sulfur (Fe-S) centers, to quinones in the photosynthetic chain and possibly in a chloroplast respiratory chain. The immediate electron acceptor for the enzyme in this species is believed to be plastoquinone. Couples the redox reaction to proton translocation, and thus conserves the redox energy in a proton gradient. The chain is NAD(P)H-quinone oxidoreductase subunit 2 B, chloroplastic from Acorus calamus (Sweet flag).